We begin with the raw amino-acid sequence, 294 residues long: S-adenosylmethionine uptake transporter (294 aa).

A run of 10 helical transmembrane segments spans residues 4 to 24 (ALKTYLTGIGWFLLSLVSSSA), 39 to 59 (FEVAFFRFFFSSIVLLPFVFY), 74 to 91 (ILRGLLLFFGMTSWTYGL), 98 to 118 (TATVVSFSIPLFTLILAVFFL), 121 to 141 (NIIWQRWVVTVVGFIGLVVTL), 148 to 168 (FNPEILYFVLAAISFAMLDII), 177 to 197 (SMISMLFYSAIVTAVVSLPVA), 207 to 227 (FELALLFVLGSSGSLILFFLL), 237 to 257 (ATAPYRYLELVISAIAAYFIF), and 260 to 280 (FPDKSTLHGAVIIIPATLFII). 2 EamA domains span residues 21 to 141 (SSSA…VVTL) and 160 to 280 (ISFA…LFII).

It belongs to the drug/metabolite transporter (DMT) superfamily. 10 TMS drug/metabolite exporter (DME) (TC 2.A.7.3) family.

Its subcellular location is the cell inner membrane. Its function is as follows. Transports S-adenosylmethionine. In Rickettsia felis (strain ATCC VR-1525 / URRWXCal2) (Rickettsia azadi), this protein is S-adenosylmethionine uptake transporter (sam).